The chain runs to 353 residues: MSTIVTVPRSVSWKGDAIAVLNQTKLPHSTEYKTLTTIEEVWKSIIMLEVRGAPAIGIVAAFGLALAAKKYNTLHIEEFQKKFNRDCNYLGTSRPTAVNLFWAIDRMRESIREITTIKEAQKILEEEALRIQQEDEEVCRNIGEYALTCFKDGDNILTICNAGSIATARYGTALAPFYIGKEKGVRLHAYACETRPVLQGGRLTTWELKQANIDVTLITDNTAAHAIQTKEINAIIVGADRIVANGDTANKIGTMNLAILAKYFNIPFYVAAPLSTFDVTKETGAEIIIEERDETEVTKIFGKQVAPIGTDVYNPAFDITPNELITGIITEKGIIRGDYKREIASLFEKQANT.

Residues 51–53 (RGA), arginine 94, and glutamine 199 each bind substrate. Aspartate 240 (proton donor) is an active-site residue. Substrate is bound at residue 250–251 (NK).

This sequence belongs to the EIF-2B alpha/beta/delta subunits family. MtnA subfamily. In terms of assembly, homodimer.

It catalyses the reaction 5-(methylsulfanyl)-alpha-D-ribose 1-phosphate = 5-(methylsulfanyl)-D-ribulose 1-phosphate. It participates in amino-acid biosynthesis; L-methionine biosynthesis via salvage pathway; L-methionine from S-methyl-5-thio-alpha-D-ribose 1-phosphate: step 1/6. Catalyzes the interconversion of methylthioribose-1-phosphate (MTR-1-P) into methylthioribulose-1-phosphate (MTRu-1-P). In Bacillus cereus (strain ATCC 14579 / DSM 31 / CCUG 7414 / JCM 2152 / NBRC 15305 / NCIMB 9373 / NCTC 2599 / NRRL B-3711), this protein is Methylthioribose-1-phosphate isomerase.